The following is a 293-amino-acid chain: NAD-dependent protein deacetylase (293 aa).

Residues 1-284 form the Deacetylase sirtuin-type domain; that stretch reads MTVAITQTGP…QPPDPLHTAT (284 aa). NAD(+)-binding positions include 27–47 and 105–108; these read GAGC…GGWK and QNVD. His123 serves as the catalytic Proton acceptor. Zn(2+) contacts are provided by Cys131, Cys134, Cys182, and Cys185. NAD(+) contacts are provided by residues 222-224, 248-250, and Cys266; these read GSS and NFG.

Belongs to the sirtuin family. Class II subfamily. The cofactor is Zn(2+).

It is found in the cytoplasm. It catalyses the reaction N(6)-acetyl-L-lysyl-[protein] + NAD(+) + H2O = 2''-O-acetyl-ADP-D-ribose + nicotinamide + L-lysyl-[protein]. Its function is as follows. NAD-dependent protein deacetylase which modulates the activities of several enzymes which are inactive in their acetylated form. In Xanthomonas campestris pv. campestris (strain B100), this protein is NAD-dependent protein deacetylase.